The sequence spans 462 residues: Ubiquitin carboxyl-terminal hydrolase calypso (462 aa).

The UCH catalytic domain occupies 29–260 (GWLELESDPG…IRFNLMAVVP (232 aa)). The active-site Nucleophile is Cys-115. Residue His-197 is the Proton donor of the active site. The ULD domain occupies 357–385 (NYDKFICTFLTMLAHQGVLGELVSQHLLP). The positively charged C-terminal tail required for binding nucleosomes stretch occupies residues 387 to 462 (KKISGQSAAN…KGRNKCRKRK (76 aa)). Positions 394–462 (AANRLNKQNS…KGRNKCRKRK (69 aa)) are disordered. Residues 399–447 (NKQNSAAASTANSSAGATAGGAKSQQQQQQQQQPQQPQTPKNGKSPGKT) are compositionally biased toward low complexity. The segment covering 448–462 (PGRRRKGRNKCRKRK) has biased composition (basic residues).

It belongs to the peptidase C12 family. BAP1 subfamily. Catalytic component of the polycomb repressive deubiquitinase (PR-DUB) complex, at least composed of caly/calypso, Asx and sba (MBD5/6 homolog). The PR-DUB complex associates with nucleosomes to mediate deubiquitination of histone H2AK118ub1 substrates; the association requires the positively charged C-terminal tail of caly, probably due to direct binding of DNA. Interacts (via ULD domain) with Asx (via DEUBAD domain); the interaction produces a stable heterodimer with a composite binding site for ubiquitin. Homodimerizes (via coiled-coil hinge-region between the UCH and ULD domains) to mediate assembly of 2 copies of the caly-Asx heterodimer into a bisymmetric tetramer; dimerization enhances PR-DUB association with nucleosomes.

Its subcellular location is the nucleus. The enzyme catalyses Thiol-dependent hydrolysis of ester, thioester, amide, peptide and isopeptide bonds formed by the C-terminal Gly of ubiquitin (a 76-residue protein attached to proteins as an intracellular targeting signal).. Its function is as follows. Catalytic component of the polycomb repressive deubiquitinase (PR-DUB) complex, a complex that specifically mediates deubiquitination of histone H2A monoubiquitinated at 'Lys-119' (H2AK118ub1). Mediates bisymmetric organization of the PR-DUB complex and is involved in association with nucleosomes to mediate deubiquitination. Does not deubiquitinate monoubiquitinated histone H2B. Required to maintain the transcriptionally repressive state of homeotic genes throughout development. The PR-DUB complex has weak or no activity toward 'Lys-48'- and 'Lys-63'-linked polyubiquitin chains. Polycomb group (PcG) protein. The polypeptide is Ubiquitin carboxyl-terminal hydrolase calypso (Drosophila virilis (Fruit fly)).